We begin with the raw amino-acid sequence, 157 residues long: MGVIEFLLALAQDMILAAIPAVGFAMVFNVPVRALRWCALLGAIGHGSRMILMTSGLNIEWSTFMASMLVGTIGIQWSRWYLAHPKVFTVAAVIPMFPGISAYTAMISAVKISQLGYSEPLMITLLTNFLTASSIVGALSIGLSIPGLWLYRKRPRV.

4 consecutive transmembrane segments (helical) span residues leucine 8–phenylalanine 28, methionine 50–valine 70, valine 87–isoleucine 107, and phenylalanine 129–tryptophan 149.

The protein belongs to the ThrE exporter (TC 2.A.79) family. In terms of assembly, the transporter is composed of YjjB and YjjP.

It localises to the cell inner membrane. In terms of biological role, involved in succinate export with YjjP. Both proteins are required for export. The chain is Probable succinate transporter subunit YjjB from Escherichia coli O1:K1 / APEC.